We begin with the raw amino-acid sequence, 287 residues long: 4-hydroxybenzoate octaprenyltransferase (287 aa).

Transmembrane regions (helical) follow at residues 19–39 (PIGSLLLLWPTLWALWLAADG), 43–63 (LHVLVIFTIGTVLMRSAGCVI), 94–116 (LALAAGLSALSFVLILPLDPLVI), 135–155 (FFAIPQAYLGIAFGFGIPMGF), 160–180 (GEVPPIAWVMLLANIFWAVAY), 207–227 (FDVAAVMLCYAVALGLLGWVG), 234–254 (ALYFAGLAVAAGMALYHYTLI), and 269–286 (NNWLGAAVFAGLALDYLI).

Belongs to the UbiA prenyltransferase family. Mg(2+) serves as cofactor.

The protein resides in the cell inner membrane. The catalysed reaction is all-trans-octaprenyl diphosphate + 4-hydroxybenzoate = 4-hydroxy-3-(all-trans-octaprenyl)benzoate + diphosphate. The protein operates within cofactor biosynthesis; ubiquinone biosynthesis. Functionally, catalyzes the prenylation of para-hydroxybenzoate (PHB) with an all-trans polyprenyl group. Mediates the second step in the final reaction sequence of ubiquinone-8 (UQ-8) biosynthesis, which is the condensation of the polyisoprenoid side chain with PHB, generating the first membrane-bound Q intermediate 3-octaprenyl-4-hydroxybenzoate. The protein is 4-hydroxybenzoate octaprenyltransferase of Azoarcus sp. (strain BH72).